The primary structure comprises 60 residues: Metallothionein A (60 aa).

Residues 1-28 (MDPCECSKSGNCNCGGSCTCTNCSCKSC) form a beta region. A divalent metal cation-binding residues include cysteine 4, cysteine 6, cysteine 12, cysteine 14, cysteine 18, cysteine 20, cysteine 23, cysteine 25, cysteine 28, cysteine 32, cysteine 33, cysteine 35, cysteine 36, cysteine 40, cysteine 43, cysteine 47, cysteine 49, cysteine 54, cysteine 58, and cysteine 59. Positions 29 to 60 (KKSCCPCCPSGCTKCASGCVCKGKTCDTSCCQ) are alpha.

This sequence belongs to the metallothionein superfamily. Type 1 family.

Its function is as follows. Metallothioneins have a high content of cysteine residues that bind various heavy metals. This Parachaenichthys charcoti (Charcot's dragonfish) protein is Metallothionein A (mta).